A 336-amino-acid chain; its full sequence is Heme A synthase (336 aa).

The next 8 membrane-spanning stretches (helical) occupy residues 5 to 25, 92 to 112, 117 to 137, 153 to 173, 191 to 211, 253 to 273, 284 to 304, and 307 to 327; these read LTRWLLTCCIMVVAMIIVGGI, GRATGLIYILPLIYFYFKGII, ILSYIIVLLLFCVQGFMGWYM, LAFHLIIAVIIYHLLFYKLVK, LIFSVAAIAMIYVQIFLGALV, FIHRLGAYSLSIIVIALIISL, VAFYLSIALLIQLSTGVITLL, and VPIIAASMHQFFAIVLLSVVI. Histidine 255 lines the heme pocket. Heme is bound at residue histidine 315.

This sequence belongs to the COX15/CtaA family. Type 2 subfamily. As to quaternary structure, interacts with CtaB. Requires heme b as cofactor.

It localises to the cell membrane. It catalyses the reaction Fe(II)-heme o + 2 A + H2O = Fe(II)-heme a + 2 AH2. The protein operates within porphyrin-containing compound metabolism; heme A biosynthesis; heme A from heme O: step 1/1. Functionally, catalyzes the conversion of heme O to heme A by two successive hydroxylations of the methyl group at C8. The first hydroxylation forms heme I, the second hydroxylation results in an unstable dihydroxymethyl group, which spontaneously dehydrates, resulting in the formyl group of heme A. This chain is Heme A synthase, found in Rickettsia bellii (strain RML369-C).